The following is a 293-amino-acid chain: MLPKRAYPVQDSNVHSQEKKIIAGNWKMNINHSQAVSYLQELNWRLIDNGHDFDACEIAVFPPFTDLRSVQTLVASDDIQISYGAQDVSAFSDGAHTGQISAQFLKDLDCKYVLIGHSEQRCLPCYPGNNSAINELNNKHDGLIANKLLRSFAAGICPILCIGDISPGDHFDATLSRFRSVLSHLKAISDKKHSIGYALGSKTHFLDSDQLHMLVAYEPSSAINSGNCANSGDIVRMAAAIKDIVNVRVLYGGGVNLFNASAVFNEDLLDGILVGRASLNASDFASLIKTCCL.

25-27 (NWK) provides a ligand contact to substrate. H117 serves as the catalytic Electrophile. E218 serves as the catalytic Proton acceptor.

This sequence belongs to the triosephosphate isomerase family. Homodimer.

Its subcellular location is the cytoplasm. The catalysed reaction is D-glyceraldehyde 3-phosphate = dihydroxyacetone phosphate. The protein operates within carbohydrate biosynthesis; gluconeogenesis. Its pathway is carbohydrate degradation; glycolysis; D-glyceraldehyde 3-phosphate from glycerone phosphate: step 1/1. Functionally, involved in the gluconeogenesis. Catalyzes stereospecifically the conversion of dihydroxyacetone phosphate (DHAP) to D-glyceraldehyde-3-phosphate (G3P). This is Triosephosphate isomerase from Tropheryma whipplei (strain TW08/27) (Whipple's bacillus).